Consider the following 384-residue polypeptide: MAKHLFTSESVSEGHPDKIADQISDAVLDAILEQDPKARVACETYVKTGMVMVGGEVTTSAWVDIEEITRNTVREIGYTHSDMGFDADSCAILNVIGKQSPDINQGVDRADPKEQGAGDQGLMFGYANNETDVFMPAPITYSHMLVKRQSEVRKDKTLPWLRPDAKSQVTFAYNSDGSIAGIDAVVLSTQHSEDVTQADLIEGVMESIIKPVLPAKWLSKETKYFINPTGRFVIGGPVGDCGLTGRKIIVDTYGGMARHGGGAFSGKDPSKVDRSAAYAARYVAKNIVAAGLADRCELQVSYAIGVAEPTSISIETFGTAKVAEELLIDLVRRHFDLRPYGLTEMLNLARPIYKSTAAYGHFGREEFPWEATDKVEALRADAGL.

His15 provides a ligand contact to ATP. Asp17 is a binding site for Mg(2+). Residue Glu43 participates in K(+) binding. Positions 56 and 99 each coordinate L-methionine. A flexible loop region spans residues Gln99 to Arg109. Residues Asp164 to Lys166, Arg231 to Phe232, Asp240, Arg246 to Lys247, Ala263, and Lys267 each bind ATP. Asp240 is a binding site for L-methionine. Lys271 provides a ligand contact to L-methionine.

This sequence belongs to the AdoMet synthase family. As to quaternary structure, homotetramer; dimer of dimers. Requires Mg(2+) as cofactor. The cofactor is K(+).

The protein resides in the cytoplasm. It catalyses the reaction L-methionine + ATP + H2O = S-adenosyl-L-methionine + phosphate + diphosphate. Its pathway is amino-acid biosynthesis; S-adenosyl-L-methionine biosynthesis; S-adenosyl-L-methionine from L-methionine: step 1/1. Functionally, catalyzes the formation of S-adenosylmethionine (AdoMet) from methionine and ATP. The overall synthetic reaction is composed of two sequential steps, AdoMet formation and the subsequent tripolyphosphate hydrolysis which occurs prior to release of AdoMet from the enzyme. The polypeptide is S-adenosylmethionine synthase (Shewanella woodyi (strain ATCC 51908 / MS32)).